The primary structure comprises 161 residues: uncharacterized protein (161 aa).

This is an uncharacterized protein from Mycobacterium bovis (strain ATCC BAA-935 / AF2122/97).